A 62-amino-acid chain; its full sequence is Photosystem II reaction center protein Z (62 aa).

Transmembrane regions (helical) follow at residues 8 to 28 and 41 to 61; these read TMFA…ITFA and FSGV…NSFI.

Belongs to the PsbZ family. In terms of assembly, PSII is composed of 1 copy each of membrane proteins PsbA, PsbB, PsbC, PsbD, PsbE, PsbF, PsbH, PsbI, PsbJ, PsbK, PsbL, PsbM, PsbT, PsbY, PsbZ, Psb30/Ycf12, at least 3 peripheral proteins of the oxygen-evolving complex and a large number of cofactors. It forms dimeric complexes.

The protein localises to the plastid. Its subcellular location is the chloroplast thylakoid membrane. May control the interaction of photosystem II (PSII) cores with the light-harvesting antenna, regulates electron flow through the 2 photosystem reaction centers. PSII is a light-driven water plastoquinone oxidoreductase, using light energy to abstract electrons from H(2)O, generating a proton gradient subsequently used for ATP formation. This Welwitschia mirabilis (Tree tumbo) protein is Photosystem II reaction center protein Z.